The following is a 432-amino-acid chain: 23S rRNA (uracil(1939)-C(5))-methyltransferase RlmD (432 aa).

A TRAM domain is found at 10-68; the sequence is RVTTREIITVTTDGLDAFGQGVARHHGKALFIAGLLPGERAEVVLSEDKKQFARGDVKK. [4Fe-4S] cluster contacts are provided by Cys81, Cys87, Cys90, and Cys162. S-adenosyl-L-methionine is bound by residues Gln265, Phe294, Asn299, Glu315, Asn342, and Asp363. Cys389 acts as the Nucleophile in catalysis.

The protein belongs to the class I-like SAM-binding methyltransferase superfamily. RNA M5U methyltransferase family. RlmD subfamily.

It catalyses the reaction uridine(1939) in 23S rRNA + S-adenosyl-L-methionine = 5-methyluridine(1939) in 23S rRNA + S-adenosyl-L-homocysteine + H(+). Functionally, catalyzes the formation of 5-methyl-uridine at position 1939 (m5U1939) in 23S rRNA. The chain is 23S rRNA (uracil(1939)-C(5))-methyltransferase RlmD from Cronobacter sakazakii (strain ATCC BAA-894) (Enterobacter sakazakii).